The chain runs to 254 residues: UstYa family oxidase phomYc' (254 aa).

A helical transmembrane segment spans residues 38-58 (LVLVLQSVLIISLLASLHILG). A glycan (N-linked (GlcNAc...) asparagine) is linked at Asn-64. Positions 138-142 (HQLHC) match the HXXHC 1 motif. A glycan (N-linked (GlcNAc...) asparagine) is linked at Asn-159. The HXXHC 2 motif lies at 173 to 177 (HIDHC).

This sequence belongs to the ustYa family.

The protein resides in the membrane. The protein operates within mycotoxin biosynthesis. UstYa family oxidase; part of the gene cluster that mediates the biosynthesis of the phomopsins, a group of hexapeptide mycotoxins which infects lupins and causes lupinosis disease in livestock. Within the pathway, phomYc' catalyzes the desaturation of the Ile moiety into 2,3-dehydroisoleucine (dIle). The pathway starts with the processing of the precursor phomA' by several endopeptidases including kexin proteases as well as the cluster-specific S41 family peptidase phomP1 and the oligopeptidase phomG' to produce 10 identical copies of the hexapeptide Tyr-Val-Ile-Pro-Ile-Asp. After being excised from the precursor peptide, the core peptides are cyclized and modified post-translationally by enzymes encoded within the gene cluster. The timing and order of proteolysis of the phomA' precursor and PTMs are still unknown. Two tyrosinase-like enzymes, phomQ1' and phomQ2, catalyze the chlorination and hydroxylation of Tyr, respectively. PhomYb, is proposed to be involved in the construction of the macrocyclic structure. The other 4 ustYa family proteins may be involved in PTMs that generate the unique structure of phomopsin A. PhomYa' is required for the hydroxylation of C-beta of Tyr. PhomYc', phomYd', and phomYe are responsible for the biosynthesis of 2,3-dehydroisoleucine (dIle), 2,3-dehydroaspartic acid (dAsp), and 3,4-dehydroproline (dPro), respectively. While dIle formation by phomYc' is indispensable for the installation of dAsp by phomYd', the order of the other PTMs have not been elucidated yet. Most of the biosynthetic enzymes likely have broad substrate specificity, and thus, there might be a metabolic grid from a precursor to phomopsin A. The enzyme(s) responsible for the biosynthesis of 3,4-dehydrovaline (dVal) have also not been identified yet. Finally, phomM' acts as an S-adenosylmethionine-dependent alpha-N-methyltransferase that catalyzes two successive N-methylation reactions, converting N-desmethyl-phomopsin A to phomopsin A and phomopsin A further to an N,N-dimethylated congener called phomopsin E. The sequence is that of UstYa family oxidase phomYc' from Diaporthe leptostromiformis (Lupinosis disease fungus).